A 286-amino-acid chain; its full sequence is Putative electron transfer flavoprotein subunit YgcQ (286 aa).

Position 225 to 253 (225 to 253 (VCIVVGASGAAALMAGVRNSKFVVAINHD)) interacts with FAD.

This sequence belongs to the ETF alpha-subunit/FixB family. As to quaternary structure, ygcQ and YgcR form a heterodimer.

Its function is as follows. May play a role in a redox process. The polypeptide is Putative electron transfer flavoprotein subunit YgcQ (ygcQ) (Escherichia coli (strain K12)).